We begin with the raw amino-acid sequence, 425 residues long: Serine--tRNA ligase (425 aa).

Position 230 to 232 (230 to 232 (TAE)) interacts with L-serine. 261 to 263 (RSE) contributes to the ATP binding site. Glu-284 contributes to the L-serine binding site. 348–351 (EISS) is a binding site for ATP. Ser-384 contributes to the L-serine binding site.

The protein belongs to the class-II aminoacyl-tRNA synthetase family. Type-1 seryl-tRNA synthetase subfamily. Homodimer. The tRNA molecule binds across the dimer.

It is found in the cytoplasm. The catalysed reaction is tRNA(Ser) + L-serine + ATP = L-seryl-tRNA(Ser) + AMP + diphosphate + H(+). It carries out the reaction tRNA(Sec) + L-serine + ATP = L-seryl-tRNA(Sec) + AMP + diphosphate + H(+). The protein operates within aminoacyl-tRNA biosynthesis; selenocysteinyl-tRNA(Sec) biosynthesis; L-seryl-tRNA(Sec) from L-serine and tRNA(Sec): step 1/1. Functionally, catalyzes the attachment of serine to tRNA(Ser). Is also able to aminoacylate tRNA(Sec) with serine, to form the misacylated tRNA L-seryl-tRNA(Sec), which will be further converted into selenocysteinyl-tRNA(Sec). This chain is Serine--tRNA ligase, found in Nitratidesulfovibrio vulgaris (strain DSM 19637 / Miyazaki F) (Desulfovibrio vulgaris).